Reading from the N-terminus, the 110-residue chain is Small EDRK-rich factor 1 (110 aa).

Positions 1–30 (MARGNQRELARQKNMKKTQEISKGKRKEDS) are enriched in basic and acidic residues. The tract at residues 1–61 (MARGNQRELA…GPHLPLKAPR (61 aa)) is disordered. Residues 11 to 17 (RQKNMKK) are required for SNCA binding. Positions 34–50 (SQRKQSSGGQKSESKMS) are enriched in low complexity.

Belongs to the SERF family. Interacts with SNCA; this interaction promotes the aggregation of SNCA. Isoform Long is predominantly expressed in heart, brain and skeletal muscle. Isoform Short and Isoform Long are expressed throughout the central nervous system, including spinal cord.

The protein localises to the cytoplasm. The protein resides in the cytosol. It is found in the nucleus. Positive regulator of amyloid protein aggregation and proteotoxicity. Induces conformational changes in amyloid proteins, such as APP, HTT, and SNCA, driving them into compact formations preceding the formation of aggregates. The sequence is that of Small EDRK-rich factor 1 (SERF1A) from Homo sapiens (Human).